A 425-amino-acid chain; its full sequence is tRNA(Ile)-lysidine synthase (425 aa).

Position 27 to 32 (27 to 32 (SGGLDS)) interacts with ATP.

It belongs to the tRNA(Ile)-lysidine synthase family.

The protein localises to the cytoplasm. It carries out the reaction cytidine(34) in tRNA(Ile2) + L-lysine + ATP = lysidine(34) in tRNA(Ile2) + AMP + diphosphate + H(+). Its function is as follows. Ligates lysine onto the cytidine present at position 34 of the AUA codon-specific tRNA(Ile) that contains the anticodon CAU, in an ATP-dependent manner. Cytidine is converted to lysidine, thus changing the amino acid specificity of the tRNA from methionine to isoleucine. This Streptococcus pneumoniae (strain 70585) protein is tRNA(Ile)-lysidine synthase.